A 683-amino-acid polypeptide reads, in one-letter code: Methionine--tRNA ligase (683 aa).

The short motif at 15 to 25 is the 'HIGH' region element; sequence PYANGPIHLGH. Zn(2+) is bound by residues cysteine 146, cysteine 149, cysteine 159, and cysteine 162. The short motif at 332-336 is the 'KMSKS' region element; sequence KMSKS. An ATP-binding site is contributed by lysine 335. A tRNA-binding domain is found at 581–683; it reads DFCKVDLRVA…AGAKAGQRVK (103 aa).

This sequence belongs to the class-I aminoacyl-tRNA synthetase family. MetG type 1 subfamily. Homodimer. Requires Zn(2+) as cofactor.

It is found in the cytoplasm. The catalysed reaction is tRNA(Met) + L-methionine + ATP = L-methionyl-tRNA(Met) + AMP + diphosphate. Its function is as follows. Is required not only for elongation of protein synthesis but also for the initiation of all mRNA translation through initiator tRNA(fMet) aminoacylation. This Histophilus somni (strain 2336) (Haemophilus somnus) protein is Methionine--tRNA ligase.